The sequence spans 493 residues: Cytochrome c-552 (493 aa).

The first 25 residues, 1 to 25 (MEKKLKSWQGWLLSGGSMVVVFVLG), serve as a signal peptide directing secretion. Residue histidine 116 coordinates heme c. Heme is bound by residues cysteine 144, cysteine 147, and lysine 148. Positions 182, 185, 186, 224, 227, and 228 each coordinate heme c. Ca(2+) is bound by residues glutamate 230, tyrosine 231, lysine 276, and glutamine 278. Tyrosine 231 contacts substrate. Histidine 279 is a binding site for substrate. Positions 290, 297, 300, 301, 315, 328, 331, 332, and 407 each coordinate heme c.

It belongs to the cytochrome c-552 family. It depends on Ca(2+) as a cofactor. The cofactor is heme c.

The protein resides in the periplasm. The catalysed reaction is 6 Fe(III)-[cytochrome c] + NH4(+) + 2 H2O = 6 Fe(II)-[cytochrome c] + nitrite + 8 H(+). The protein operates within nitrogen metabolism; nitrate reduction (assimilation). Catalyzes the reduction of nitrite to ammonia, consuming six electrons in the process. This is Cytochrome c-552 from Bacteroides thetaiotaomicron (strain ATCC 29148 / DSM 2079 / JCM 5827 / CCUG 10774 / NCTC 10582 / VPI-5482 / E50).